The primary structure comprises 464 residues: tRNA modification GTPase MnmE (464 aa).

The (6S)-5-formyl-5,6,7,8-tetrahydrofolate site is built by Arg28, Glu90, and Arg129. In terms of domain architecture, TrmE-type G spans 226 to 385 (GLATAIVGRP…LEEKIAELFF (160 aa)). Asn236 serves as a coordination point for K(+). Residues 236–241 (NVGKSS), 255–261 (TDIAGTT), and 280–283 (DTAG) contribute to the GTP site. Ser240 serves as a coordination point for Mg(2+). K(+) is bound by residues Thr255, Ile257, and Thr260. Thr261 is a binding site for Mg(2+). Lys464 contributes to the (6S)-5-formyl-5,6,7,8-tetrahydrofolate binding site.

The protein belongs to the TRAFAC class TrmE-Era-EngA-EngB-Septin-like GTPase superfamily. TrmE GTPase family. As to quaternary structure, homodimer. Heterotetramer of two MnmE and two MnmG subunits. Requires K(+) as cofactor.

The protein resides in the cytoplasm. Its function is as follows. Exhibits a very high intrinsic GTPase hydrolysis rate. Involved in the addition of a carboxymethylaminomethyl (cmnm) group at the wobble position (U34) of certain tRNAs, forming tRNA-cmnm(5)s(2)U34. This is tRNA modification GTPase MnmE from Ligilactobacillus salivarius (strain UCC118) (Lactobacillus salivarius).